The chain runs to 102 residues: NADH-quinone oxidoreductase subunit K 1 (102 aa).

3 consecutive transmembrane segments (helical) span residues 5-25 (LLHVLILAGILFVLGLTCVLV), 30-50 (IIMMLIGIEIMLNAAMLAFVG), and 62-82 (VFALMIIAMTSAEVSLALALV).

This sequence belongs to the complex I subunit 4L family. In terms of assembly, NDH-1 is composed of 14 different subunits. Subunits NuoA, H, J, K, L, M, N constitute the membrane sector of the complex.

The protein localises to the cell inner membrane. The catalysed reaction is a quinone + NADH + 5 H(+)(in) = a quinol + NAD(+) + 4 H(+)(out). Its function is as follows. NDH-1 shuttles electrons from NADH, via FMN and iron-sulfur (Fe-S) centers, to quinones in the respiratory chain. The immediate electron acceptor for the enzyme in this species is believed to be ubiquinone. Couples the redox reaction to proton translocation (for every two electrons transferred, four hydrogen ions are translocated across the cytoplasmic membrane), and thus conserves the redox energy in a proton gradient. This Geotalea uraniireducens (strain Rf4) (Geobacter uraniireducens) protein is NADH-quinone oxidoreductase subunit K 1.